We begin with the raw amino-acid sequence, 580 residues long: uncharacterized protein (580 aa).

5 disordered regions span residues S161–D241, L256–D281, N325–K345, P472–D495, and S544–R564. Positions S192–D203 are enriched in low complexity. 2 stretches are compositionally biased toward polar residues: residues T223–D241 and L256–K269. Residues V326–K341 show a composition bias toward basic and acidic residues. Positions P481 to D495 are enriched in polar residues.

This is an uncharacterized protein from Schizosaccharomyces pombe (strain 972 / ATCC 24843) (Fission yeast).